Here is a 120-residue protein sequence, read N- to C-terminus: Myohemerythrin (120 aa).

Residues H26, H56, E60, H75, H79, H108, and D113 each contribute to the Fe cation site.

This sequence belongs to the hemerythrin family. Monomer.

The protein localises to the cytoplasm. In terms of biological role, myohemerythrin is an oxygen-binding protein found in the retractor muscles of certain worms. The oxygen-binding site contains two iron atoms. This is Myohemerythrin from Theromyzon tessulatum (Duck leech).